The primary structure comprises 183 residues: Peptide deformylase (183 aa).

Cysteine 110 and histidine 153 together coordinate Fe cation. Residue glutamate 154 is part of the active site. Histidine 157 lines the Fe cation pocket.

Belongs to the polypeptide deformylase family. Requires Fe(2+) as cofactor.

It carries out the reaction N-terminal N-formyl-L-methionyl-[peptide] + H2O = N-terminal L-methionyl-[peptide] + formate. Functionally, removes the formyl group from the N-terminal Met of newly synthesized proteins. Requires at least a dipeptide for an efficient rate of reaction. N-terminal L-methionine is a prerequisite for activity but the enzyme has broad specificity at other positions. The polypeptide is Peptide deformylase (Listeria monocytogenes serovar 1/2a (strain ATCC BAA-679 / EGD-e)).